We begin with the raw amino-acid sequence, 190 residues long: dCTP deaminase (190 aa).

DCTP is bound by residues 111-116 (KSTYAR), 135-137 (TLE), Gln-156, Tyr-172, and Gln-182. Glu-137 (proton donor/acceptor) is an active-site residue.

It belongs to the dCTP deaminase family. As to quaternary structure, homotrimer.

It carries out the reaction dCTP + H2O + H(+) = dUTP + NH4(+). The protein operates within pyrimidine metabolism; dUMP biosynthesis; dUMP from dCTP (dUTP route): step 1/2. Functionally, catalyzes the deamination of dCTP to dUTP. The polypeptide is dCTP deaminase (Stenotrophomonas maltophilia (strain K279a)).